The following is a 312-amino-acid chain: uncharacterized protein (312 aa).

Disordered stretches follow at residues 1-26 and 45-106; these read MQKDIGRRFQRNKKKINSKPGGAMVA and GNLQ…LPSG. Basic residues predominate over residues 8–17; the sequence is RFQRNKKKIN. Over residues 68–77 the composition is skewed to basic and acidic residues; it reads NGKRNGDKVR. A compositionally biased stretch (polar residues) spans 85–103; that stretch reads GHSSYAGSRISGGNSNSHL.

This is an uncharacterized protein from Schizosaccharomyces pombe (strain 972 / ATCC 24843) (Fission yeast).